Consider the following 58-residue polypeptide: MKRQKRDRLERARTKGYQAGLAGRSKELCPYQCIDARGYWLGGWRDAVDERSQGYMVN.

This sequence belongs to the ribosome modulation factor family.

The protein localises to the cytoplasm. During stationary phase, converts 70S ribosomes to an inactive dimeric form (100S ribosomes). This is Ribosome modulation factor from Tolumonas auensis (strain DSM 9187 / NBRC 110442 / TA 4).